Here is a 1247-residue protein sequence, read N- to C-terminus: F-box/WD repeat-containing protein A (1247 aa).

Residues 1–214 (MQYVNGNDIS…PATVSGRLAK (214 aa)) enclose the START domain. 2 disordered regions span residues 484–514 (GNKDGNVVSSKNKRKRNKNNENKNNNNDNII) and 552–576 (QQPQQQQQQPQEQQQNHSQLKKEIK). Residues 552–566 (QQPQQQQQQPQEQQQ) show a composition bias toward low complexity. Residues 631 to 677 (NSGFDNLPEEVVQIIFSNLSAINIVNLSLVCKRFKMATDSPILWKNL) enclose the F-box domain. Disordered stretches follow at residues 697–744 (SNLS…QQQQ) and 833–856 (GQESPINKNSSDNPKPNAYNKRDN). Low complexity-rich tracts occupy residues 707–719 (NSNSGDSADGSSS) and 726–744 (QQQNQQQNQQQNQQQQQQQ). Polar residues predominate over residues 833 to 846 (GQESPINKNSSDNP). WD repeat units follow at residues 895 to 934 (GHNRAIKAVKSEGNSAITVSTEKKIKFWNLNTGQCIGDYE), 945 to 984 (DHTQKSSCIWPLSDYTKVHIGHKNGTVTMVDFIEQPIEVI), 988 to 1025 (RPTNLADGFDFTFPGKYLIWEHTIIHYWDVETSTLLWN), 1029 to 1073 (AHTK…CINT), 1076 to 1114 (GHSYAVNCIEPIGDYMALTGSTDKTLKLWDLRQASTFIS), 1119 to 1158 (KHTGPIRCISYQEKNGIVLSGSDDGSIIAFNLDNWNLSNI), and 1218 to 1247 (NHESAVTCIESDEAGFISGSQNGLVLRWDF).

As to quaternary structure, component of an SCF complex including at least culA. Formation of this complex appears to require activity of the MAP kinase erk2. Interacts with regA.

In terms of biological role, substrate recognition component of a SCF (SKP1-CUL1-F-box protein) E3 ubiquitin-protein ligase complex which mediates the ubiquitination and subsequent proteasomal degradation of target proteins. May target the cAMP phosphodiesterase regA for degradation leading to an increase in cAMP and PKA activity. Promotes development of prestalk cells as opposed to prespores within the developing fruiting body. Required for culmination and fruiting body development. In Dictyostelium discoideum (Social amoeba), this protein is F-box/WD repeat-containing protein A (fbxA).